Here is a 348-residue protein sequence, read N- to C-terminus: Dihydroorotase (348 aa).

Zn(2+)-binding residues include H17 and H19. Substrate-binding positions include 19-21 and N45; that span reads HLR. 3 residues coordinate Zn(2+): K103, H140, and H178. An N6-carboxylysine modification is found at K103. H140 is a binding site for substrate. L223 provides a ligand contact to substrate. D251 lines the Zn(2+) pocket. D251 is a catalytic residue. Residues H255 and A267 each contribute to the substrate site.

The protein belongs to the metallo-dependent hydrolases superfamily. DHOase family. Class II DHOase subfamily. As to quaternary structure, homodimer. Zn(2+) serves as cofactor.

It catalyses the reaction (S)-dihydroorotate + H2O = N-carbamoyl-L-aspartate + H(+). The protein operates within pyrimidine metabolism; UMP biosynthesis via de novo pathway; (S)-dihydroorotate from bicarbonate: step 3/3. In terms of biological role, catalyzes the reversible cyclization of carbamoyl aspartate to dihydroorotate. The protein is Dihydroorotase of Salmonella typhi.